The following is a 265-amino-acid chain: Aquaporin-5 (265 aa).

The Cytoplasmic portion of the chain corresponds to 1–12 (MKKEVCSVAFLK). Residues 13-33 (AVFAEFLATLIFVFFGLGSAL) traverse the membrane as a helical segment. Over 34-39 (KWPSAL) the chain is Extracellular. The chain crosses the membrane as a helical span at residues 40–60 (PTILQIALAFGLAIGTLAQAL). At 61–65 (GPVSG) the chain is on the cytoplasmic side. The discontinuously helical intramembrane region spans 66-74 (GHINPAITL). Residues 69 to 71 (NPA) carry the NPA 1 motif. Over 75–87 (ALLVGNQISLLRA) the chain is Cytoplasmic. A helical transmembrane segment spans residues 88-108 (FFYVAAQLVGAIAGAGILYGV). At 109 to 126 (APLNARGNLAVNALNNNT) the chain is on the extracellular side. N-linked (GlcNAc...) asparagine glycosylation is found at Asn124 and Asn125. The chain crosses the membrane as a helical span at residues 127-147 (TQGQAMVVELILTFQLALCIF). Topologically, residues 148–158 (ASTDSRRTSPV) are cytoplasmic. The helical transmembrane segment at 159-179 (GSPALSIGLSVTLGHLVGIYF) threads the bilayer. Position 180 (Thr180) is a topological domain, extracellular. The segment at residues 181–191 (GCSMNPARSFG) is an intramembrane region (discontinuously helical). The NPA 2 motif lies at 185-187 (NPA). At 192-203 (PAVVMNRFSPAH) the chain is on the extracellular side. The chain crosses the membrane as a helical span at residues 204–224 (WVFWVGPIVGAVLAAILYFYL). Residues 225-265 (LFPNSLSLSERVAIIKGTYEPDEDWEEQREERKKTMELTTR) lie on the Cytoplasmic side of the membrane.

It belongs to the MIP/aquaporin (TC 1.A.8) family. As to quaternary structure, homotetramer; each monomer provides an independent water pore. Interacts with TRPV4; the interaction is probably indirect and regulates TRPV4 activation by hypotonicity. Detected in skin eccrine sweat glands, at the apical cell membrane and at intercellular canaliculi (at protein level).

The protein localises to the apical cell membrane. It is found in the cell membrane. Its subcellular location is the cytoplasmic vesicle membrane. It catalyses the reaction H2O(in) = H2O(out). Its function is as follows. Aquaporins form homotetrameric transmembrane channels, with each monomer independently mediating water transport across the plasma membrane along its osmotic gradient. Plays an important role in fluid secretion in salivary glands. Required for TRPV4 activation by hypotonicity. Together with TRPV4, controls regulatory volume decrease in salivary epithelial cells. Seems to play a redundant role in water transport in the eye, lung and in sweat glands. This is Aquaporin-5 from Homo sapiens (Human).